The following is a 490-amino-acid chain: Alpha-galactosidase (490 aa).

4 to 70 is an NAD(+) binding site; it reads FKIAIIGAGS…LPTRVTATTD (67 aa). Position 150 (Asn150) interacts with substrate. Residue Cys171 coordinates Mn(2+). His172 acts as the Proton donor in catalysis. Position 201 (His201) interacts with Mn(2+). The active-site Proton acceptor is Tyr258.

This sequence belongs to the glycosyl hydrolase 4 family. As to quaternary structure, homodimer. Mn(2+) is required as a cofactor. Requires NAD(+) as cofactor.

It carries out the reaction Hydrolysis of terminal, non-reducing alpha-D-galactose residues in alpha-D-galactosides, including galactose oligosaccharides, galactomannans and galactolipids.. The protein is Alpha-galactosidase (melA) of Rhizobium meliloti (strain 1021) (Ensifer meliloti).